The chain runs to 255 residues: Type III pantothenate kinase (255 aa).

6–13 is a binding site for ATP; sequence DIGNTNIK. 107–110 is a binding site for substrate; the sequence is GADR. Residue aspartate 109 is the Proton acceptor of the active site. Threonine 132 lines the ATP pocket. Residue threonine 184 coordinates substrate.

The protein belongs to the type III pantothenate kinase family. As to quaternary structure, homodimer. It depends on NH4(+) as a cofactor. Requires K(+) as cofactor.

The protein resides in the cytoplasm. It catalyses the reaction (R)-pantothenate + ATP = (R)-4'-phosphopantothenate + ADP + H(+). It participates in cofactor biosynthesis; coenzyme A biosynthesis; CoA from (R)-pantothenate: step 1/5. Functionally, catalyzes the phosphorylation of pantothenate (Pan), the first step in CoA biosynthesis. This Roseiflexus castenholzii (strain DSM 13941 / HLO8) protein is Type III pantothenate kinase.